We begin with the raw amino-acid sequence, 290 residues long: MKGKIIKGIAGFYYVKVEENLIECKARGKFRHKDVKPMVGDNVVIQVENGKGVIESIEKRSSELLRPAVANISLAFVVFAIKSPDINFDLLNKFLVLCEYNHIEAIVCLNKVDLVSEEERENVKKRINDIGYEVLYINAKEGLGTDILKEKINGNITVLCGPSGAGKSTLINKLTNKEHMLTGIVSEKIGRGKHTTRHSELIEVSNGYIVDTPGFSTLEIKELMNKEDLKYCFPEFEEHNESCKYRGCLHNKEPKCTVKQAVEEGKINKYRYEFYIKTLEEIIEGEKNKW.

Positions 61–218 (SSELLRPAVA…IVDTPGFSTL (158 aa)) constitute a CP-type G domain. GTP is bound by residues 110 to 113 (NKVD) and 161 to 169 (GPSGAGKST). Positions 243, 248, 250, and 256 each coordinate Zn(2+).

Belongs to the TRAFAC class YlqF/YawG GTPase family. RsgA subfamily. Monomer. Associates with 30S ribosomal subunit, binds 16S rRNA. Zn(2+) serves as cofactor.

It is found in the cytoplasm. Its function is as follows. One of several proteins that assist in the late maturation steps of the functional core of the 30S ribosomal subunit. Helps release RbfA from mature subunits. May play a role in the assembly of ribosomal proteins into the subunit. Circularly permuted GTPase that catalyzes slow GTP hydrolysis, GTPase activity is stimulated by the 30S ribosomal subunit. In Clostridium botulinum (strain Eklund 17B / Type B), this protein is Small ribosomal subunit biogenesis GTPase RsgA.